The following is a 236-amino-acid chain: 2-C-methyl-D-erythritol 4-phosphate cytidylyltransferase (236 aa).

Belongs to the IspD/TarI cytidylyltransferase family. IspD subfamily.

The enzyme catalyses 2-C-methyl-D-erythritol 4-phosphate + CTP + H(+) = 4-CDP-2-C-methyl-D-erythritol + diphosphate. It participates in isoprenoid biosynthesis; isopentenyl diphosphate biosynthesis via DXP pathway; isopentenyl diphosphate from 1-deoxy-D-xylulose 5-phosphate: step 2/6. Catalyzes the formation of 4-diphosphocytidyl-2-C-methyl-D-erythritol from CTP and 2-C-methyl-D-erythritol 4-phosphate (MEP). The polypeptide is 2-C-methyl-D-erythritol 4-phosphate cytidylyltransferase (Burkholderia vietnamiensis (strain G4 / LMG 22486) (Burkholderia cepacia (strain R1808))).